The following is a 61-amino-acid chain: Large ribosomal subunit protein uL30 (61 aa).

The protein belongs to the universal ribosomal protein uL30 family. Part of the 50S ribosomal subunit.

In Corynebacterium jeikeium (strain K411), this protein is Large ribosomal subunit protein uL30.